The primary structure comprises 164 residues: Phosphopantetheine adenylyltransferase (164 aa).

Serine 9 serves as a coordination point for substrate. ATP-binding positions include serine 9–phenylalanine 10 and histidine 17. Residues lysine 41, leucine 78, and arginine 92 each contribute to the substrate site. Residues glycine 93 to arginine 95, glutamate 103, and glycine 128 to threonine 134 contribute to the ATP site.

This sequence belongs to the bacterial CoaD family. As to quaternary structure, homohexamer. Mg(2+) is required as a cofactor.

The protein resides in the cytoplasm. It catalyses the reaction (R)-4'-phosphopantetheine + ATP + H(+) = 3'-dephospho-CoA + diphosphate. It functions in the pathway cofactor biosynthesis; coenzyme A biosynthesis; CoA from (R)-pantothenate: step 4/5. In terms of biological role, reversibly transfers an adenylyl group from ATP to 4'-phosphopantetheine, yielding dephospho-CoA (dPCoA) and pyrophosphate. This is Phosphopantetheine adenylyltransferase from Bartonella bacilliformis (strain ATCC 35685 / KC583 / Herrer 020/F12,63).